The sequence spans 806 residues: GPI ethanolamine phosphate transferase 2 (806 aa).

Residues asparagine 70, asparagine 184, and asparagine 242 are each glycosylated (N-linked (GlcNAc...) asparagine). 3 helical membrane passes run 396 to 416 (MLFL…YCYI), 425 to 445 (SVLM…SSFV), and 451 to 471 (IWWW…PSCT). An N-linked (GlcNAc...) asparagine glycan is attached at asparagine 488. 8 consecutive transmembrane segments (helical) span residues 508 to 528 (PSIK…DGFT), 532 to 552 (LLSI…TCWA), 593 to 613 (LFFK…VVFA), 624 to 644 (LFTI…FLVF), 664 to 684 (CEMF…QFGG), 706 to 726 (IYVV…YWSL), 745 to 765 (LSSM…CICM), and 782 to 804 (LLGW…LLMV).

It belongs to the PIGG/PIGN/PIGO family. PIGG subfamily.

Its subcellular location is the endoplasmic reticulum membrane. The protein operates within glycolipid biosynthesis; glycosylphosphatidylinositol-anchor biosynthesis. In terms of biological role, ethanolamine phosphate transferase involved in glycosylphosphatidylinositol-anchor biosynthesis. Transfers ethanolamine phosphate to the GPI second mannose. This Eremothecium gossypii (strain ATCC 10895 / CBS 109.51 / FGSC 9923 / NRRL Y-1056) (Yeast) protein is GPI ethanolamine phosphate transferase 2 (LAS21).